The sequence spans 198 residues: Holliday junction branch migration complex subunit RuvA (198 aa).

Residues 1–61 (MILYRIGEII…EYQYATYAFK (61 aa)) form a domain I region. The interval 62-139 (DFKERLLFVD…KMISPKDAAK (78 aa)) is domain II. Positions 140–144 (INETT) are flexible linker. The interval 144-198 (TNTLSEVKETLKMVGFKTKQIDGALSKISSTDDVEKMIEEAIKLMSTQNYESATA) is domain III.

The protein belongs to the RuvA family. As to quaternary structure, homotetramer. Forms an RuvA(8)-RuvB(12)-Holliday junction (HJ) complex. HJ DNA is sandwiched between 2 RuvA tetramers; dsDNA enters through RuvA and exits via RuvB. An RuvB hexamer assembles on each DNA strand where it exits the tetramer. Each RuvB hexamer is contacted by two RuvA subunits (via domain III) on 2 adjacent RuvB subunits; this complex drives branch migration. In the full resolvosome a probable DNA-RuvA(4)-RuvB(12)-RuvC(2) complex forms which resolves the HJ.

Its subcellular location is the cytoplasm. The RuvA-RuvB-RuvC complex processes Holliday junction (HJ) DNA during genetic recombination and DNA repair, while the RuvA-RuvB complex plays an important role in the rescue of blocked DNA replication forks via replication fork reversal (RFR). RuvA specifically binds to HJ cruciform DNA, conferring on it an open structure. The RuvB hexamer acts as an ATP-dependent pump, pulling dsDNA into and through the RuvAB complex. HJ branch migration allows RuvC to scan DNA until it finds its consensus sequence, where it cleaves and resolves the cruciform DNA. This Mycoplasmopsis agalactiae (strain NCTC 10123 / CIP 59.7 / PG2) (Mycoplasma agalactiae) protein is Holliday junction branch migration complex subunit RuvA.